The primary structure comprises 340 residues: L-threonine 3-dehydrogenase (340 aa).

Position 38 (Cys-38) interacts with Zn(2+). Residues Thr-40 and His-43 each act as charge relay system in the active site. Zn(2+) is bound by residues His-63, Glu-64, Cys-93, Cys-96, Cys-99, and Cys-107. NAD(+)-binding positions include Ile-175, Asp-195, Arg-200, 262-264, and 286-287; these read LGI and IY.

Belongs to the zinc-containing alcohol dehydrogenase family. Homotetramer. Zn(2+) is required as a cofactor.

Its subcellular location is the cytoplasm. It catalyses the reaction L-threonine + NAD(+) = (2S)-2-amino-3-oxobutanoate + NADH + H(+). The protein operates within amino-acid degradation; L-threonine degradation via oxydo-reductase pathway; glycine from L-threonine: step 1/2. In terms of biological role, catalyzes the NAD(+)-dependent oxidation of L-threonine to 2-amino-3-ketobutyrate. This is L-threonine 3-dehydrogenase from Pseudoalteromonas atlantica (strain T6c / ATCC BAA-1087).